The chain runs to 227 residues: Ubiquitin domain-containing protein 1 (227 aa).

Residues 1–35 (MGNCVGRQRRERPAAPGHPRKRAGRNEPLKKERLK) are disordered. Over residues 24 to 35 (GRNEPLKKERLK) the composition is skewed to basic and acidic residues. One can recognise a Ubiquitin-like domain in the interval 149–224 (FPLKVRLSTG…IQVIINQPPP (76 aa)).

As to quaternary structure, interacts with UBTD1.

Its function is as follows. May be involved in the regulation of cellular senescence through a positive feedback loop with TP53. Is a TP53 downstream target gene that increases the stability of TP53 protein by promoting the ubiquitination and degradation of MDM2. The polypeptide is Ubiquitin domain-containing protein 1 (Ubtd1) (Rattus norvegicus (Rat)).